The sequence spans 473 residues: Photosystem II CP43 reaction center protein (473 aa).

Residues 1–14 (MKTLYSLRRFYHVE) constitute a propeptide that is removed on maturation. At T15 the chain carries N-acetylthreonine. T15 bears the Phosphothreonine mark. 5 helical membrane passes run 69–93 (LFEV…PHLA), 134–155 (LLGP…KDRN), 178–200 (KALY…RKIT), 255–275 (KPFA…LSYS), and 291–312 (WFNN…ASQA). Residue E367 participates in [CaMn4O5] cluster binding. The chain crosses the membrane as a helical span at residues 447–471 (RARAAAAGFEKGIDRDFEPVLFMTP).

The protein belongs to the PsbB/PsbC family. PsbC subfamily. In terms of assembly, PSII is composed of 1 copy each of membrane proteins PsbA, PsbB, PsbC, PsbD, PsbE, PsbF, PsbH, PsbI, PsbJ, PsbK, PsbL, PsbM, PsbT, PsbX, PsbY, PsbZ, Psb30/Ycf12, at least 3 peripheral proteins of the oxygen-evolving complex and a large number of cofactors. It forms dimeric complexes. Binds multiple chlorophylls and provides some of the ligands for the Ca-4Mn-5O cluster of the oxygen-evolving complex. It may also provide a ligand for a Cl- that is required for oxygen evolution. PSII binds additional chlorophylls, carotenoids and specific lipids. serves as cofactor.

It localises to the plastid. The protein resides in the chloroplast thylakoid membrane. Its function is as follows. One of the components of the core complex of photosystem II (PSII). It binds chlorophyll and helps catalyze the primary light-induced photochemical processes of PSII. PSII is a light-driven water:plastoquinone oxidoreductase, using light energy to abstract electrons from H(2)O, generating O(2) and a proton gradient subsequently used for ATP formation. This chain is Photosystem II CP43 reaction center protein, found in Solanum tuberosum (Potato).